Consider the following 642-residue polypeptide: MPVITLPDGSQRHYDHPVSPMDVALDIGPGLAKATIAGRVNGELVDASDLIENDATLSIITAKDEEGLEIIRHSCAHLLGHAIKQLWPHTKMAIGPVVDNGFYYDVDLDRTLTQEDVEALEKRMHELAEKNYDVIKKKVSWHEARETFVKRGESYKVSILDENIAHDDKPGLYHHEEYVDMCRGPHVPNMRFCHHFKLMKTAGAYWRGDSNNKMLQRIYGTAWADKKALNAYLQRLEEAAKRDHRKIGKQLDLYHMQEEAPGMVFWHNDGWTIFRELEVFVRSKLKEYQYQEVKGPFMMDRVLWEKTGHWDNYKDAMFTTSSENREYCIKPMNCPGHVQIFNQGLKSYRDLPLRMAEFGSCHRNEPSGALHGLMRVRGFTQDDAHIFCTEEQIRDEVNACIRMVYDMYSTFGFEKIVVKLSTRPDKRIGSDEMWDRAEADLAVALEENNIPFEYQLGEGAFYGPKIEFTLYDCLDRAWQCGTVQLDFSLPSRLSASYVGEDNERKVPVMIHRAILGSMERFIGILTEEFAGFFPTWLAPVQVVVMNITDSQSEYVNELTQKLQNAGIRVKADLRNEKIGFKIREHTLRRVPYMLVCGDKEVEAGKVAVRTRRGKDLGSLDVNDVIEKLQQEIRSRSLQQLEE.

The 61-residue stretch at 1 to 61 folds into the TGS domain; that stretch reads MPVITLPDGS…ENDATLSIIT (61 aa). The tract at residues 243–534 is catalytic; the sequence is DHRKIGKQLD…LTEEFAGFFP (292 aa). Zn(2+) is bound by residues cysteine 334, histidine 385, and histidine 511.

The protein belongs to the class-II aminoacyl-tRNA synthetase family. Homodimer. Requires Zn(2+) as cofactor.

It localises to the cytoplasm. It carries out the reaction tRNA(Thr) + L-threonine + ATP = L-threonyl-tRNA(Thr) + AMP + diphosphate + H(+). Functionally, catalyzes the attachment of threonine to tRNA(Thr) in a two-step reaction: L-threonine is first activated by ATP to form Thr-AMP and then transferred to the acceptor end of tRNA(Thr). Also edits incorrectly charged L-seryl-tRNA(Thr). This Salmonella agona (strain SL483) protein is Threonine--tRNA ligase.